The sequence spans 563 residues: MNTKELIASELASIIDSLDQEAILKLLETPKNSEMGDIAFPAFSLAKVERKAPQMIAAELAEKMNSQAFEKVVATGPYVNFFLDKSAISAQVLQAVTTEKEHYADQNIGKQENVVIDMSSPNIAKPFSIGHLRSTVIGDSLSHIFQKIGYQTVKVNHLGDWGKQFGMLIVAYKKWGDEEAVKAHPIDELLKLYVRINAEAENDPSLDEEAREWFRKLENGDEEALALWQWFRDESLVEFNRLYNELKVEFDSYNGEAFYNDKMDAVVDILSEKGLLLESEGAQVVNLEKYGIEHPALIKKSDGATLYITRDLAAALYRKNEYQFAKSIYVVGQEQSAHFKQLKAVLQEMGYDWSDDITHVPFGLVTKEGKKLSTRKGNVILLEPTVAEAVSRAKVQIEAKNPELENKDQVAHAVGIGAIKFYDLKTDRTNGYDFDLEAMVSFEGETGPYVQYAYARIQSILRKADFKPETAGNYSLNDTESWEIIKLIQDFPRIINRAADNFEPSIIAKFAISLAQSFNKYYAHTRILDESPERDSRLALSYATAVVLKEALRLLGVEAPEKM.

The short motif at 121 to 131 (PNIAKPFSIGH) is the 'HIGH' region element.

It belongs to the class-I aminoacyl-tRNA synthetase family. In terms of assembly, monomer.

It localises to the cytoplasm. It catalyses the reaction tRNA(Arg) + L-arginine + ATP = L-arginyl-tRNA(Arg) + AMP + diphosphate. The sequence is that of Arginine--tRNA ligase from Streptococcus pneumoniae (strain Taiwan19F-14).